Consider the following 233-residue polypeptide: Protein AC81 (233 aa).

A run of 2 helical transmembrane segments spans residues 171–191 and 194–214; these read SFQT…VEKF and INLL…NYII.

It is found in the host nucleus. The protein localises to the host membrane. Its subcellular location is the virion. In terms of biological role, plays an essential role in the assembly of nucleocapsids with envelopes. This is Protein AC81 (AC81) from Autographa californica nuclear polyhedrosis virus (AcMNPV).